The chain runs to 67 residues: Cell division protein ZapB (67 aa).

Residues 3-59 (LELLSKLETKIQAALETIELLKMELEEEKQTSSSLSEQNQQLQQELTSWNEKVTGLV) are a coiled coil.

The protein belongs to the ZapB family. As to quaternary structure, homodimer. The ends of the coiled-coil dimer bind to each other, forming polymers. Interacts with FtsZ.

The protein localises to the cytoplasm. In terms of biological role, non-essential, abundant cell division factor that is required for proper Z-ring formation. It is recruited early to the divisome by direct interaction with FtsZ, stimulating Z-ring assembly and thereby promoting cell division earlier in the cell cycle. Its recruitment to the Z-ring requires functional FtsA or ZipA. The chain is Cell division protein ZapB from Shewanella halifaxensis (strain HAW-EB4).